Here is a 270-residue protein sequence, read N- to C-terminus: Calpain small subunit 1 (270 aa).

Met-1 is subject to N-acetylmethionine. Ser-6 carries the phosphoserine modification. The EF-hand 1; atypical domain maps to 98-132; sequence EEERQFRKLFVQLAGDDMEVSATELMNILNKVVTR. Ca(2+) contacts are provided by Ala-111, Asp-114, Glu-116, Glu-121, Asp-139, Asp-154, Asp-156, Thr-158, Lys-160, and Glu-165. 4 consecutive EF-hand domains span residues 141 to 174, 171 to 206, 207 to 235, and 236 to 270; these read FGID…NNIK, NNIK…AGFH, LNQH…ISCL, and VRLD…TMYS. Position 181 is an N6-acetyllysine (Lys-181). Ca(2+) contacts are provided by Asp-184, Asp-186, Ser-188, Thr-190, Glu-195, and Asp-227.

Homodimer or heterodimer of a large (catalytic) and a small (regulatory) subunit. In presence of calcium, the heterodimer dissociates.

It is found in the cytoplasm. The protein localises to the cell membrane. Regulatory subunit of the calcium-regulated non-lysosomal thiol-protease which catalyzes limited proteolysis of substrates involved in cytoskeletal remodeling and signal transduction. Essential for embryonic development. In Rattus norvegicus (Rat), this protein is Calpain small subunit 1 (Capns1).